The chain runs to 194 residues: Superoxide dismutase [Cu-Zn] (194 aa).

The N-terminal stretch at 1-20 (MTRPLALIIFLVAILTNTDP) is a signal peptide. Cu cation contacts are provided by H85 and H104. C96 and C188 are oxidised to a cystine. 4 residues coordinate Zn(2+): H104, H112, H121, and D124. H162 contacts Cu cation.

It belongs to the Cu-Zn superoxide dismutase family. In terms of assembly, homodimer. The cofactor is Cu cation. Zn(2+) serves as cofactor.

It carries out the reaction 2 superoxide + 2 H(+) = H2O2 + O2. Functionally, destroys radicals which are normally produced within the cells and which are toxic to biological systems. The chain is Superoxide dismutase [Cu-Zn] from Ramazzottius varieornatus (Water bear).